The chain runs to 706 residues: Catalase HPII (706 aa).

Residues H77 and N151 contribute to the active site. Residue Y365 participates in heme binding. The segment at 512-532 (EPPEEQVDESAPVSPALSQVT) is disordered.

The protein belongs to the catalase family. HPII subfamily. Heme is required as a cofactor.

The protein localises to the cytoplasm. The catalysed reaction is 2 H2O2 = O2 + 2 H2O. In terms of biological role, decomposes hydrogen peroxide into water and oxygen; serves to protect cells from the toxic effects of hydrogen peroxide. The polypeptide is Catalase HPII (katE) (Mycobacterium avium).